The sequence spans 343 residues: Pseudaminic acid synthase (343 aa).

An AFP-like domain is found at 287–343; sequence SLYASKDIKKGEMFSEENVKSVRPSFGLHPKFYQELLGKKASKDIKFGDALKQGDFQ.

Belongs to the pseudaminic acid synthase family. A divalent metal cation serves as cofactor.

The enzyme catalyses 2,4-diacetamido-2,4,6-trideoxy-beta-L-altrose + phosphoenolpyruvate + H2O = pseudaminate + phosphate. Its function is as follows. Catalyzes the fifth step in the biosynthesis of pseudaminic acid, a sialic-acid-like sugar that is used to modify flagellin. Catalyzes the condensation of phosphoenolpyruvate with 2,4-diacetamido-2,4,6-trideoxy-beta-l-altropyranose, forming pseudaminic acid. The protein is Pseudaminic acid synthase (pseI) of Campylobacter jejuni subsp. jejuni serotype O:2 (strain ATCC 700819 / NCTC 11168).